A 1149-amino-acid chain; its full sequence is Translocase of chloroplast 126, chloroplastic (1149 aa).

Disordered regions lie at residues M1–L206, N219–T292, and L315–S431. Residues L131–V142 show a composition bias toward acidic residues. The span at T152–S168 shows a compositional bias: low complexity. Composition is skewed to acidic residues over residues Y271–S280 and G335–E357. Polar residues predominate over residues T406–N429. One can recognise an AIG1-type G domain in the interval D514–R743. A G1 region spans residues G523–S530. G526 to A531 is a binding site for GTP. Residue S530 coordinates Mg(2+). A G2 region spans residues S550 to V554. Residues D570 to G573 form a G3 region. The segment at T642–S645 is G4. GTP is bound by residues H643 and E691 to N692. The tract at residues E691 to H693 is G5. Disordered regions lie at residues K769–F800 and K833–G869. Positions E773–D796 are enriched in acidic residues. Composition is skewed to basic and acidic residues over residues K833–R842 and M852–D862. The chain crosses the membrane as a helical span at residues M1123–G1144.

The protein belongs to the TRAFAC class TrmE-Era-EngA-EngB-Septin-like GTPase superfamily. AIG1/Toc34/Toc159-like paraseptin GTPase family. TOC159 subfamily. In terms of assembly, part of the TOC core complex. The cofactor is Mg(2+).

The protein resides in the plastid. The protein localises to the chloroplast outer membrane. In terms of biological role, GTPase involved in protein precursor import into chloroplasts. Seems to recognize chloroplast-destined precursor proteins and regulate their presentation to the translocation channel through GTP hydrolysis. Probably specialized in the import of nuclear encoded non-photosynthetic preproteins from the cytoplasm to the chloroplast. The protein is Translocase of chloroplast 126, chloroplastic of Physcomitrium patens (Spreading-leaved earth moss).